A 187-amino-acid chain; its full sequence is MKTMCYFRNHFLIAMPALDDVNFARTVTFICEHNQDGAMGIIINRPLSITLDQMLQHIKVKDCPQEVGEMPVFLGGPIQQERGFVLHRPIGQWETTLRVGDEVGITTSRDILDAITQGKGPPQTLIALGYAGWGPNQLEQELAENAWLSTPANSTVVFDTPYQQRWEAAAALAGVDLSRLSGEIGHA.

This sequence belongs to the UPF0301 (AlgH) family.

In Nitrosococcus oceani (strain ATCC 19707 / BCRC 17464 / JCM 30415 / NCIMB 11848 / C-107), this protein is UPF0301 protein Noc_0368.